Consider the following 318-residue polypeptide: Transaldolase (318 aa).

K126 functions as the Schiff-base intermediate with substrate in the catalytic mechanism.

This sequence belongs to the transaldolase family. Type 1 subfamily. Homodimer.

It is found in the cytoplasm. The enzyme catalyses D-sedoheptulose 7-phosphate + D-glyceraldehyde 3-phosphate = D-erythrose 4-phosphate + beta-D-fructose 6-phosphate. It functions in the pathway carbohydrate degradation; pentose phosphate pathway; D-glyceraldehyde 3-phosphate and beta-D-fructose 6-phosphate from D-ribose 5-phosphate and D-xylulose 5-phosphate (non-oxidative stage): step 2/3. Its function is as follows. Transaldolase is important for the balance of metabolites in the pentose-phosphate pathway. The polypeptide is Transaldolase (Cupriavidus necator (strain ATCC 17699 / DSM 428 / KCTC 22496 / NCIMB 10442 / H16 / Stanier 337) (Ralstonia eutropha)).